We begin with the raw amino-acid sequence, 311 residues long: Probable manganese-dependent inorganic pyrophosphatase (311 aa).

Mn(2+) is bound by residues histidine 9, aspartate 13, aspartate 15, aspartate 75, histidine 97, and aspartate 149.

The protein belongs to the PPase class C family. It depends on Mn(2+) as a cofactor.

Its subcellular location is the cytoplasm. It catalyses the reaction diphosphate + H2O = 2 phosphate + H(+). In Lactobacillus johnsonii (strain CNCM I-12250 / La1 / NCC 533), this protein is Probable manganese-dependent inorganic pyrophosphatase.